The sequence spans 281 residues: NAD kinase (281 aa).

D61 serves as the catalytic Proton acceptor. NAD(+)-binding positions include 61–62 (DG), 134–135 (ND), R145, D164, 175–180 (TAYSLS), and Q234.

This sequence belongs to the NAD kinase family. It depends on a divalent metal cation as a cofactor.

It localises to the cytoplasm. It catalyses the reaction NAD(+) + ATP = ADP + NADP(+) + H(+). Involved in the regulation of the intracellular balance of NAD and NADP, and is a key enzyme in the biosynthesis of NADP. Catalyzes specifically the phosphorylation on 2'-hydroxyl of the adenosine moiety of NAD to yield NADP. This chain is NAD kinase, found in Clostridium botulinum (strain ATCC 19397 / Type A).